The following is a 120-amino-acid chain: Photosystem II extrinsic protein U (120 aa).

The first 29 residues, 1–29, serve as a signal peptide directing secretion; sequence MKRLLSLLTGVLVMTGLLMALIFPQSAYA.

Belongs to the PsbU family. In terms of assembly, PSII is composed of 1 copy each of membrane proteins PsbA, PsbB, PsbC, PsbD, PsbE, PsbF, PsbH, PsbI, PsbJ, PsbK, PsbL, PsbM, PsbT, PsbX, PsbY, Psb30/Ycf12, peripheral proteins PsbO, CyanoQ (PsbQ), PsbU, PsbV and a large number of cofactors. It forms dimeric complexes.

The protein resides in the cellular thylakoid membrane. Its function is as follows. One of the extrinsic, lumenal subunits of photosystem II (PSII). PSII is a light-driven water plastoquinone oxidoreductase, using light energy to abstract electrons from H(2)O, generating a proton gradient subsequently used for ATP formation. The extrinsic proteins stabilize the structure of photosystem II oxygen-evolving complex (OEC), the ion environment of oxygen evolution and protect the OEC against heat-induced inactivation. The sequence is that of Photosystem II extrinsic protein U from Prochlorococcus marinus (strain MIT 9303).